A 290-amino-acid polypeptide reads, in one-letter code: Inositol monophosphatase 2 (290 aa).

Mg(2+)-binding residues include E83, D103, I105, and D106. E83 contributes to the substrate binding site. Substrate contacts are provided by residues 105–108 (IDGT), 207–209 (GSS), Q226, and D233. A Mg(2+)-binding site is contributed by D233.

This sequence belongs to the inositol monophosphatase superfamily. Homodimer. Mg(2+) is required as a cofactor.

Its subcellular location is the cytoplasm. The enzyme catalyses a myo-inositol phosphate + H2O = myo-inositol + phosphate. It functions in the pathway polyol metabolism; myo-inositol biosynthesis; myo-inositol from D-glucose 6-phosphate: step 2/2. Functionally, can use myo-inositol monophosphates, scylloinositol 1,4-diphosphate, glucose-1-phosphate, beta-glycerophosphate, and 2'-AMP as substrates. Has been implicated as the pharmacological target for lithium Li(+) action in brain. The chain is Inositol monophosphatase 2 (Impa2) from Rattus norvegicus (Rat).